The following is a 463-amino-acid chain: Fibrinogen beta chain (463 aa).

Residues 1–12 (ASVEYDNEEDSP) show a composition bias toward acidic residues. The interval 1–56 (ASVEYDNEEDSPQIDARAHRPLDKRQEAAPTLRPVAPPISGTGYQPRPPKQDKQAM) is disordered. Position 5 is a sulfotyrosine (Y5). Over residues 16–27 (ARAHRPLDKRQE) the composition is skewed to basic and acidic residues. 2 cysteine pairs are disulfide-bonded: C205–C289 and C215–C244. Residues 206–461 (NIPVVSGREC…KMSMKIKPYF (256 aa)) enclose the Fibrinogen C-terminal domain. A glycan (N-linked (GlcNAc...) asparagine) is linked at N367. 3 residues coordinate Ca(2+): D384, D386, and W388. The cysteines at positions 397 and 410 are disulfide-linked.

In terms of assembly, heterohexamer; disulfide linked. Contains 2 sets of 3 non-identical chains (alpha, beta and gamma). The 2 heterotrimers are in head to head conformation with the N-termini in a small central domain. Conversion of fibrinogen to fibrin is triggered by thrombin, which cleaves fibrinopeptides A and B from alpha and beta chains, and thus exposes the N-terminal polymerization sites responsible for the formation of the soft clot. The soft clot is converted into the hard clot by factor XIIIA which catalyzes the epsilon-(gamma-glutamyl)lysine cross-linking between gamma chains (stronger) and between alpha chains (weaker) of different monomers.

The protein resides in the secreted. Its function is as follows. Cleaved by the protease thrombin to yield monomers which, together with fibrinogen alpha (FGA) and fibrinogen gamma (FGG), polymerize to form an insoluble fibrin matrix. Fibrin has a major function in hemostasis as one of the primary components of blood clots. The sequence is that of Fibrinogen beta chain (FGB) from Gallus gallus (Chicken).